The following is a 364-amino-acid chain: 1-acyl-sn-glycerol-3-phosphate acyltransferase epsilon (364 aa).

2 helical membrane-spanning segments follow: residues 15 to 35 (LLPSVVLLGTAPTYVLAWGVW) and 61 to 81 (MVLFFFENYTGVQILLYGDLP). The HXXXXD motif signature appears at 93-98 (HQSTVD). A helical transmembrane segment spans residues 344 to 364 (LYVNTWIYGTLLGCLWVTIKA).

It belongs to the 1-acyl-sn-glycerol-3-phosphate acyltransferase family. In terms of tissue distribution, widely expressed.

It is found in the endoplasmic reticulum membrane. Its subcellular location is the nucleus envelope. It localises to the mitochondrion. The enzyme catalyses a 1-acyl-sn-glycero-3-phosphate + an acyl-CoA = a 1,2-diacyl-sn-glycero-3-phosphate + CoA. It carries out the reaction 1-(9Z-octadecenoyl)-sn-glycero-3-phosphate + tetradecanoyl-CoA = 1-(9Z)-octadecenoyl-2-tetradecanoyl-sn-glycero-3-phosphate + CoA. It catalyses the reaction pentadecanoyl-CoA + 1-(9Z-octadecenoyl)-sn-glycero-3-phosphate = 1-(9Z)-octadecenoyl-2-pentadecanoyl-sn-glycero-3-phosphate + CoA. The catalysed reaction is 1-(9Z-octadecenoyl)-sn-glycero-3-phosphate + octadecanoyl-CoA = 1-(9Z-octadecenoyl)-2-octadecanoyl-sn-glycero-3-phosphate + CoA. The enzyme catalyses nonadecanoyl-CoA + 1-(9Z-octadecenoyl)-sn-glycero-3-phosphate = 1-(9Z)-octadecenoyl-2-nonadecanoyl-sn-glycero-3-phosphate + CoA. It carries out the reaction 1-(9Z-octadecenoyl)-sn-glycero-3-phosphoethanolamine + (9Z)-octadecenoyl-CoA = 1,2-di-(9Z-octadecenoyl)-sn-glycero-3-phosphoethanolamine + CoA. It catalyses the reaction 1-(9Z-octadecenoyl)-sn-glycero-3-phosphocholine + (9Z)-octadecenoyl-CoA = 1,2-di-(9Z-octadecenoyl)-sn-glycero-3-phosphocholine + CoA. The catalysed reaction is 1-(9Z-octadecenoyl)-sn-glycero-3-phospho-(1D-myo-inositol) + (5Z,8Z,11Z,14Z)-eicosatetraenoyl-CoA = 1-(9Z-octadecenoyl)-2-(5Z,8Z,11Z,14Z-eicosatetraenoyl)-sn-glycero-3-phospho-1D-myo-inositol + CoA. The enzyme catalyses 1-(9Z-octadecenoyl)-sn-glycero-3-phospho-L-serine + (9Z)-octadecenoyl-CoA = 1,2-di-(9Z)-octadecenoyl-sn-glycero-3-phospho-L-serine + CoA. It carries out the reaction 1-(9Z-octadecenoyl)-sn-glycero-3-phospho-L-serine + (5Z,8Z,11Z,14Z)-eicosatetraenoyl-CoA = 1-(9Z-octadecenoyl)-2-(5Z,8Z,11Z,14Z-eicosatetraenoyl)-sn-glycero-3-phospho-L-serine + CoA. It catalyses the reaction 1-hexadecanoyl-sn-glycero-3-phosphate + (9Z)-octadecenoyl-CoA = 1-hexadecanoyl-2-(9Z-octadecenoyl)-sn-glycero-3-phosphate + CoA. The catalysed reaction is 1-heptadecanoyl-sn-glycero-3-phosphate + (9Z)-octadecenoyl-CoA = 1-heptadecanoyl-2-(9Z)-octadecenoyl-sn-glycero-3-phosphate + CoA. The enzyme catalyses 1-(5Z,8Z,11Z,14Z-eicosatetraenoyl)-sn-glycero-3-phosphate + (9Z)-octadecenoyl-CoA = 1-(5Z,8Z,11Z,14Z)-eicosatetraenoyl-2-(9Z)-octadecenoyl-sn-glycero-3-phosphate + CoA. It carries out the reaction 1-octadecanoyl-sn-glycero-3-phosphate + (9Z)-octadecenoyl-CoA = 1-octadecanoyl-2-(9Z-octadecenoyl)-sn-glycero-3-phosphate + CoA. It catalyses the reaction 1-(9Z-octadecenoyl)-sn-glycero-3-phosphate + (5Z,8Z,11Z,14Z)-eicosatetraenoyl-CoA = 1-(9Z)-octadecenoyl-2-(5Z,8Z,11Z,14Z)-eicosatetraenoyl-sn-glycero-3-phosphate + CoA. The catalysed reaction is heptadecanoyl-CoA + 1-(9Z-octadecenoyl)-sn-glycero-3-phosphate = 1-(9Z)-octadecenoyl-2-heptadecanoyl-sn-glycero-3-phosphate + CoA. The enzyme catalyses 1-(9Z-octadecenoyl)-sn-glycero-3-phosphocholine + (5Z,8Z,11Z,14Z)-eicosatetraenoyl-CoA = 1-(9Z)-octadecenoyl-2-(5Z,8Z,11Z,14Z)-icosatetraenoyl-sn-glycero-3-phosphocholine + CoA. It carries out the reaction 1-(9Z-octadecenoyl)-sn-glycero-3-phosphate + (9Z)-octadecenoyl-CoA = 1,2-di-(9Z-octadecenoyl)-sn-glycero-3-phosphate + CoA. It catalyses the reaction 1-(9Z-octadecenoyl)-sn-glycero-3-phosphate + hexadecanoyl-CoA = 1-hexadecanoyl-2-(9Z-octadecenoyl)-sn-glycero-3-phosphate + CoA. Its pathway is phospholipid metabolism; CDP-diacylglycerol biosynthesis; CDP-diacylglycerol from sn-glycerol 3-phosphate: step 2/3. In terms of biological role, converts 1-acyl-sn-glycerol-3-phosphate (lysophosphatidic acid or LPA) into 1,2-diacyl-sn-glycerol-3-phosphate (phosphatidic acid or PA) by incorporating an acyl moiety at the sn-2 position of the glycerol backbone. Acts on LPA containing saturated or unsaturated fatty acids C15:0-C20:4 at the sn-1 position using C18:1-CoA as the acyl donor. Also acts on lysophosphatidylethanolamine using oleoyl-CoA, but not arachidonoyl-CoA, and lysophosphatidylinositol using arachidonoyl-CoA, but not oleoyl-CoA. Activity toward lysophosphatidylglycerol not detectable. The protein is 1-acyl-sn-glycerol-3-phosphate acyltransferase epsilon (AGPAT5) of Homo sapiens (Human).